The primary structure comprises 145 residues: MKKLTKKAENLLLLIWVQAFLALAGSLFYSEVMNYVPCELCWYQRILMYPLVLIYGVAAIKKDISFALPGLFMSGIGLLVSTYHYLVQHVSIFQEVGGACSGSVPCNVIYVNYFGFISIPFMAGVAFLIIFVLHLLILREQGRKA.

A helical membrane pass occupies residues 9–28; the sequence is ENLLLLIWVQAFLALAGSLF. Cys38 and Cys41 form a disulfide bridge. The next 2 membrane-spanning stretches (helical) occupy residues 43–62 and 69–86; these read YQRI…AIKK and PGLF…YHYL. A disulfide bridge links Cys100 with Cys106. A helical transmembrane segment spans residues 115–137; that stretch reads GFISIPFMAGVAFLIIFVLHLLI.

Belongs to the DsbB family. BdbC subfamily.

It is found in the cell membrane. Its function is as follows. Required for disulfide bond formation in some proteins. This Oceanobacillus iheyensis (strain DSM 14371 / CIP 107618 / JCM 11309 / KCTC 3954 / HTE831) protein is Probable disulfide formation protein.